The primary structure comprises 698 residues: Protein arginine N-methyltransferase 7 (698 aa).

SAM-dependent MTase PRMT-type domains lie at 14–357 (QNTW…YSLW) and 366–698 (EKPA…EKSE).

This sequence belongs to the class I-like SAM-binding methyltransferase superfamily. Protein arginine N-methyltransferase family. PRMT7 subfamily.

Functionally, essential arginine methyltransferase that can both catalyze the formation of omega-N monomethylarginine (MMA) and symmetrical dimethylarginine (sDMA). Specifically mediates the symmetrical dimethylation of arginine residues in the small nuclear ribonucleoproteins SmD1 and SmD3. The chain is Protein arginine N-methyltransferase 7 (Art7) from Drosophila mojavensis (Fruit fly).